A 501-amino-acid polypeptide reads, in one-letter code: Ribose import ATP-binding protein RbsA (501 aa).

ABC transporter domains follow at residues 5 to 241 and 252 to 495; these read LQLK…VGRK and APGD…VGKL. 37 to 44 is an ATP binding site; it reads GENGAGKS.

It belongs to the ABC transporter superfamily. Ribose importer (TC 3.A.1.2.1) family. As to quaternary structure, the complex is composed of an ATP-binding protein (RbsA), two transmembrane proteins (RbsC) and a solute-binding protein (RbsB).

Its subcellular location is the cell inner membrane. The catalysed reaction is D-ribose(out) + ATP + H2O = D-ribose(in) + ADP + phosphate + H(+). Part of the ABC transporter complex RbsABC involved in ribose import. Responsible for energy coupling to the transport system. This Shigella sonnei (strain Ss046) protein is Ribose import ATP-binding protein RbsA.